The sequence spans 511 residues: Type 2 DNA topoisomerase 6 subunit B-like (511 aa).

The segment at 398-485 (DSAQGTEDAP…RALAPGRASL (88 aa)) is disordered. A compositionally biased stretch (polar residues) spans 408–422 (DNSSLELLADTSGQA). Positions 440 to 451 (LRSARAPSPSEA) are enriched in low complexity. Positions 466 to 475 (RGREHREAHG) are enriched in basic and acidic residues.

The protein belongs to the TOP6B-like family. Heterotetramer of SPO11 and 2 TOP6BL chains. Interacts with SPO11. In terms of tissue distribution, detected in lung, spleen,colon and in skeletal muscle. Expressed in the ovaries, Fallopian tubes and uterus.

The protein resides in the chromosome. Functionally, component of a topoisomerase 6 complex specifically required for meiotic recombination. Together with SPO11, mediates DNA cleavage that forms the double-strand breaks (DSB) that initiate meiotic recombination. The complex promotes relaxation of negative and positive supercoiled DNA and DNA decatenation through cleavage and ligation cycles. The protein is Type 2 DNA topoisomerase 6 subunit B-like of Homo sapiens (Human).